A 147-amino-acid polypeptide reads, in one-letter code: Large-conductance mechanosensitive channel (147 aa).

Helical transmembrane passes span 8–28 and 81–101; these read FIMK…AAFG and GIFL…FMII.

This sequence belongs to the MscL family. As to quaternary structure, homopentamer.

It is found in the cell inner membrane. Functionally, channel that opens in response to stretch forces in the membrane lipid bilayer. May participate in the regulation of osmotic pressure changes within the cell. The chain is Large-conductance mechanosensitive channel from Trichlorobacter lovleyi (strain ATCC BAA-1151 / DSM 17278 / SZ) (Geobacter lovleyi).